The chain runs to 127 residues: Large ribosomal subunit protein bL21 (127 aa).

This sequence belongs to the bacterial ribosomal protein bL21 family. In terms of assembly, part of the 50S ribosomal subunit. Contacts protein L20.

Its function is as follows. This protein binds to 23S rRNA in the presence of protein L20. This is Large ribosomal subunit protein bL21 from Synechococcus sp. (strain ATCC 27144 / PCC 6301 / SAUG 1402/1) (Anacystis nidulans).